We begin with the raw amino-acid sequence, 354 residues long: Coiled-coil domain-containing protein 86 (354 aa).

Residues 1-354 (MDTPLRRSRR…QPPQRPATKV (354 aa)) form a disordered region. Phosphoserine occurs at positions 18 and 24. The span at 31 to 44 (VLVEFESNPKETGE) shows a compositional bias: basic and acidic residues. Phosphoserine is present on residues Ser47 and Ser53. Positions 49–58 (PGLGSPSRQP) are enriched in low complexity. Phosphothreonine is present on Thr60. Ser61, Ser64, Ser75, Ser86, Ser105, Ser108, Ser123, and Ser183 each carry phosphoserine. Over residues 97 to 107 (FPQNQPESSPE) the composition is skewed to polar residues. Positions 199–211 (PAREGPAPKKREG) are enriched in basic and acidic residues. 2 positions are modified to phosphoserine: Ser212 and Ser213. A compositionally biased stretch (basic residues) spans 232–248 (GKPKSGRVWKDRSKKRF). Basic and acidic residues-rich tracts occupy residues 267–289 (DRQE…ERRR) and 297–311 (AENL…RKAE). Positions 274–317 (AKDFARHLEEEKERRRQEKKKRRAENLRRRLENERKAEIVQVIR) form a coiled coil. Residues 320-330 (AKLKRAKKKQL) are compositionally biased toward basic residues. At Arg336 the chain carries Citrulline.

In terms of processing, citrullinated by PADI4.

The protein localises to the nucleus. The protein resides in the chromosome. Its subcellular location is the nucleolus. Functionally, required for proper chromosome segregation during mitosis and error-free mitotic progression. The protein is Coiled-coil domain-containing protein 86 of Bos taurus (Bovine).